Here is a 405-residue protein sequence, read N- to C-terminus: Deoxyguanosinetriphosphate triphosphohydrolase-like protein (405 aa).

One can recognise an HD domain in the interval 75–219 (RLTHTIEVAQ…AAIADDIAYN (145 aa)).

It belongs to the dGTPase family. Type 2 subfamily.

The sequence is that of Deoxyguanosinetriphosphate triphosphohydrolase-like protein from Rhizobium etli (strain ATCC 51251 / DSM 11541 / JCM 21823 / NBRC 15573 / CFN 42).